The primary structure comprises 269 residues: Diadenylate cyclase (269 aa).

The 158-residue stretch at 109-266 (RSGIYDLFAN…GGKMILEIDP (158 aa)) folds into the DAC domain.

Belongs to the adenylate cyclase family. DacZ subfamily. The cofactor is Mn(2+).

It catalyses the reaction 2 ATP = 3',3'-c-di-AMP + 2 diphosphate. Its function is as follows. Diadenylate cyclase that catalyzes the condensation of 2 ATP molecules into cyclic di-AMP (c-di-AMP). c-di-AMP is a second messenger for intracellular signal transduction involved in the control of important regulatory processes such as osmoregulation. Is essential for H.volcanii. Overexpression of DacZ leads to cell death, suggesting the need for tight regulation of c-di-AMP levels. Cannot use GTP as substrate. This Haloferax volcanii (strain ATCC 29605 / DSM 3757 / JCM 8879 / NBRC 14742 / NCIMB 2012 / VKM B-1768 / DS2) (Halobacterium volcanii) protein is Diadenylate cyclase.